Consider the following 2130-residue polypeptide: DNA polymerase zeta catalytic subunit (2130 aa).

Disordered regions lie at residues 528 to 635 (PAES…TGTL), 734 to 891 (GCEI…HDEA), 927 to 954 (FTPS…SNTP), and 1189 to 1243 (QAKD…SAAQ). The span at 553 to 574 (TPIKSISSKSKSSPSKTPTTPI) shows a compositional bias: low complexity. Residues 620–629 (PRLSLQLDQG) show a composition bias toward polar residues. Residues 735-753 (CEIERPHRSEGSALDELKP) are compositionally biased toward basic and acidic residues. Polar residues-rich tracts occupy residues 771–786 (SEIQ…TSLD), 794–808 (LSQS…SMNG), and 818–835 (DSSS…SVSE). Basic and acidic residues predominate over residues 840–860 (LESKPKKSDETARSCDEKLQR). The span at 938–954 (TETTPQLSPKSNESNTP) shows a compositional bias: polar residues. The segment covering 1228-1243 (PSSQSSEQSVSSSAAQ) has biased composition (low complexity). Zn(2+)-binding residues include Cys2041, Cys2045, Cys2054, and Cys2057. Positions 2086, 2089, 2098, and 2103 each coordinate [4Fe-4S] cluster. Positions 2086–2103 (CQACCGRLGSLQCDSLDC) match the CysB motif motif.

Belongs to the DNA polymerase type-B family. In terms of assembly, catalytic subunit of the zeta DNA polymerase complex, which consists of PolZ1/DNApol-zeta and the accessory component PolZ2/Rev7. Interacts with the apurinic/apyrimidinic (AP) endonuclease Rrp1; the interaction is likely indirect and mediated via PolZ2. Requires [4Fe-4S] cluster as cofactor.

It catalyses the reaction DNA(n) + a 2'-deoxyribonucleoside 5'-triphosphate = DNA(n+1) + diphosphate. Inhibited by tetracyclic diterpene antibiotic aphidicolin. Its function is as follows. As the catalytic subunit of the DNA polymerase zeta complex, plays a crucial role in translesion DNA synthesis (TLS) and various DNA repair mechanisms. Lacks an intrinsic 3'-5' exonuclease activity and thus has no proofreading function. During homologous recombination (HR) repair, has a overlapping role with the error-prone translesion polymerase eta to initiate repair synthesis which is completed by end joining or another polymerase that can bind and reinitiate synthesis. May participate in the Rrp1-dependent base excision repair (BER) pathway responsible for repair of DNA lesions that gives rise to apurinic/apyrimidinic (AP) sites. Unlike mammalian orthologs, it is not an error-prone polymerase. This is DNA polymerase zeta catalytic subunit from Drosophila melanogaster (Fruit fly).